Consider the following 241-residue polypeptide: Thiamine import ATP-binding protein ThiQ (241 aa).

The ABC transporter domain maps to 2 to 239 (IQLDKLNHCY…PKDEVLIQYL (238 aa)). 41 to 48 (GPSGAGKS) serves as a coordination point for ATP.

It belongs to the ABC transporter superfamily. Thiamine importer (TC 3.A.1.19.1) family. In terms of assembly, the complex is composed of two ATP-binding proteins (ThiQ), two transmembrane proteins (ThiP) and a solute-binding protein (ThiB).

It localises to the cell inner membrane. The catalysed reaction is thiamine(out) + ATP + H2O = thiamine(in) + ADP + phosphate + H(+). Part of the ABC transporter complex ThiBPQ involved in thiamine import. Responsible for energy coupling to the transport system. This Photobacterium profundum (strain SS9) protein is Thiamine import ATP-binding protein ThiQ.